The primary structure comprises 218 residues: GTP cyclohydrolase 1 (218 aa).

Residues Cys-109, His-112, and Cys-180 each coordinate Zn(2+).

The protein belongs to the GTP cyclohydrolase I family. As to quaternary structure, toroid-shaped homodecamer, composed of two pentamers of five dimers.

It carries out the reaction GTP + H2O = 7,8-dihydroneopterin 3'-triphosphate + formate + H(+). It participates in cofactor biosynthesis; 7,8-dihydroneopterin triphosphate biosynthesis; 7,8-dihydroneopterin triphosphate from GTP: step 1/1. This Haemophilus influenzae (strain ATCC 51907 / DSM 11121 / KW20 / Rd) protein is GTP cyclohydrolase 1 (folE).